A 370-amino-acid polypeptide reads, in one-letter code: Actin-related protein 2/3 complex subunit 1A-A (370 aa).

WD repeat units lie at residues 6–45 (FLLEPISCHAWNKDLTQIAISPNNHEVHIYKKSGDQWVKG), 50–89 (EHNGHITGIDWAPKSDRIVTCGADRNAYVWSQKDGVWKPT), 140–179 (PIRSTVLSLDWHPNNVLLAAGSCDFKTRVFSAYIKEVDEK), 202–241 (SSGGWVHSVSFSASGNKLAWVSHDSTVSVADASKNMSVSQ), 244–284 (TEFL…TFVS), and 322–365 (LHQN…SYIQ).

It belongs to the WD repeat ARPC1 family. In terms of assembly, component of the Arp2/3 complex.

The protein resides in the cytoplasm. It is found in the cytoskeleton. Its subcellular location is the nucleus. Functionally, probably functions as a component of the Arp2/3 complex which is involved in regulation of actin polymerization and together with an activating nucleation-promoting factor (NPF) mediates the formation of branched actin networks. In addition to its role in the cytoplasmic cytoskeleton, the Arp2/3 complex also promotes actin polymerization in the nucleus, thereby regulating gene transcription and repair of damaged DNA. The polypeptide is Actin-related protein 2/3 complex subunit 1A-A (arpc1a-a) (Xenopus laevis (African clawed frog)).